Consider the following 479-residue polypeptide: MNRNPDQNTLPNITLKIIETYLGRLPSVNEYHMLKLQTRNIQKITVFNKDIFVSLVKKNKKRFFSDVDTSASEIKDRILSYFSKQTQTYNIGKLFTIIELQSVLVTTYTDILGVLTIKAPNVISSKISYNVTSMEELARDMLNSMNVAVIDKAKVMGRHNVSSLVKNVNKLMEEYLRRHNKSCICYGSYSLYLINPNIRYGDIDILQTNSRTFLIDLAFLIKFITGNNIILSKIPYLRNYMVIKDENDNHIIDSFNIRQDTMNVVPKIFIDNIYIVDPTFQLLNMIKMFSQIDRLEDLSKDPEKFNARMATMLEYVRYTHGIVFDGTRNNMPMKCIIDENTRIVTVTTKDYFSFKKCLVYLDENVLSSDILDLNADTSCDFESVTNSVYLIHDNIMYTYFSNTILLSDKGTVHEISARGLCAHILLYQMLTSGEYKQCLSDLLNSMMNRDKIPIYSHTERDKKPGRHGFINIEKDIIVF.

Residues D202 and D204 contribute to the active site. 3 residues coordinate Ca(2+): D202, D204, and D253.

Belongs to the poxviridae poly(A) polymerase catalytic subunit family. In terms of assembly, heterodimer of a large (catalytic) subunit and a small (regulatory) subunit.

The enzyme catalyses RNA(n) + ATP = RNA(n)-3'-adenine ribonucleotide + diphosphate. In terms of biological role, polymerase that creates the 3'-poly(A) tail of mRNA's. This chain is Poly(A) polymerase catalytic subunit (OPG063), found in Mus musculus (Mouse).